A 283-amino-acid polypeptide reads, in one-letter code: Pantothenate synthetase (283 aa).

30 to 37 (MGCLHEGH) contacts ATP. His37 serves as the catalytic Proton donor. Gln61 contributes to the (R)-pantoate binding site. Residue Gln61 participates in beta-alanine binding. 147–150 (GQKD) contributes to the ATP binding site. Position 153 (Gln153) interacts with (R)-pantoate. ATP contacts are provided by residues Val176 and 184–187 (KSSR).

This sequence belongs to the pantothenate synthetase family. Homodimer.

It localises to the cytoplasm. It carries out the reaction (R)-pantoate + beta-alanine + ATP = (R)-pantothenate + AMP + diphosphate + H(+). The protein operates within cofactor biosynthesis; (R)-pantothenate biosynthesis; (R)-pantothenate from (R)-pantoate and beta-alanine: step 1/1. In terms of biological role, catalyzes the condensation of pantoate with beta-alanine in an ATP-dependent reaction via a pantoyl-adenylate intermediate. In Clostridium novyi (strain NT), this protein is Pantothenate synthetase.